We begin with the raw amino-acid sequence, 119 residues long: DNA-binding protein inhibitor ID-3 (119 aa).

In terms of domain architecture, bHLH spans 28-80; that stretch reads RGKSPAAEEPLSLLDDMNHCYSRLRELVPGVPRGTQLSQVEILQRVIDYILDL.

In terms of assembly, homodimer, and heterodimer with other HLH proteins. Interacts with COPS5 and COPS7A. Interacts with IFI204. Interacts with GATA4 and NKX2-5. Interacts with ANKRD2; both proteins cooperate in myoblast differentiation. Interacts with CLOCK and BMAL1.

The protein localises to the nucleus. In terms of biological role, transcriptional regulator (lacking a basic DNA binding domain) which negatively regulates the basic helix-loop-helix (bHLH) transcription factors by forming heterodimers and inhibiting their DNA binding and transcriptional activity. Implicated in regulating a variety of cellular processes, including cellular growth, senescence, differentiation, apoptosis, angiogenesis, and neoplastic transformation. Involved in myogenesis by inhibiting skeletal muscle and cardiac myocyte differentiation and promoting muscle precursor cells proliferation. Inhibits the binding of E2A-containing protein complexes to muscle creatine kinase E-box enhancer. Regulates the circadian clock by repressing the transcriptional activator activity of the CLOCK-BMAL1 heterodimer. This chain is DNA-binding protein inhibitor ID-3 (ID3), found in Bos taurus (Bovine).